Reading from the N-terminus, the 111-residue chain is Nucleoid-associated protein Teth514_0034 (111 aa).

It belongs to the YbaB/EbfC family. Homodimer.

The protein resides in the cytoplasm. The protein localises to the nucleoid. Functionally, binds to DNA and alters its conformation. May be involved in regulation of gene expression, nucleoid organization and DNA protection. The protein is Nucleoid-associated protein Teth514_0034 of Thermoanaerobacter sp. (strain X514).